The following is a 357-amino-acid chain: Peptide chain release factor 1 (357 aa).

Glutamine 233 bears the N5-methylglutamine mark.

This sequence belongs to the prokaryotic/mitochondrial release factor family. Methylated by PrmC. Methylation increases the termination efficiency of RF1.

Its subcellular location is the cytoplasm. Peptide chain release factor 1 directs the termination of translation in response to the peptide chain termination codons UAG and UAA. This chain is Peptide chain release factor 1, found in Enterococcus faecalis (strain ATCC 700802 / V583).